We begin with the raw amino-acid sequence, 397 residues long: Na(+)/H(+) antiporter NhaA 1 (397 aa).

12 helical membrane-spanning segments follow: residues 15–35 (FQLEAASGLLLIAAAVLALII), 42–62 (YLYGGLLEVPVAVQVGALNIA), 65–85 (LLLWINDGLMALFFLLIGLEV), 101–121 (ILPATAAVGGMVVPALIYWFI), 129–149 (VAGWAIPTATDIAFALGVLAL), 160–180 (LFLMTLAIIDDLGAIIVIALF), 183–203 (GTLSSVSLLLAAACLLVLVAM), 219–241 (LILWVCVLKSGVHATLAGVALAF), 265–285 (WVAYAILPIFAFANAGVSLAG), 299–319 (ITIGLLLGKTVGVFGLTWVAV), 335–355 (ILGVAILCGIGFTMSLFVGSL), and 370–390 (MGILTGSFFAAVIGYAVTAMA).

Belongs to the NhaA Na(+)/H(+) (TC 2.A.33) antiporter family.

It localises to the cell inner membrane. The catalysed reaction is Na(+)(in) + 2 H(+)(out) = Na(+)(out) + 2 H(+)(in). Na(+)/H(+) antiporter that extrudes sodium in exchange for external protons. The polypeptide is Na(+)/H(+) antiporter NhaA 1 (Pseudomonas putida (strain ATCC 47054 / DSM 6125 / CFBP 8728 / NCIMB 11950 / KT2440)).